Here is a 158-residue protein sequence, read N- to C-terminus: SsrA-binding protein (158 aa).

This sequence belongs to the SmpB family.

It is found in the cytoplasm. Its function is as follows. Required for rescue of stalled ribosomes mediated by trans-translation. Binds to transfer-messenger RNA (tmRNA), required for stable association of tmRNA with ribosomes. tmRNA and SmpB together mimic tRNA shape, replacing the anticodon stem-loop with SmpB. tmRNA is encoded by the ssrA gene; the 2 termini fold to resemble tRNA(Ala) and it encodes a 'tag peptide', a short internal open reading frame. During trans-translation Ala-aminoacylated tmRNA acts like a tRNA, entering the A-site of stalled ribosomes, displacing the stalled mRNA. The ribosome then switches to translate the ORF on the tmRNA; the nascent peptide is terminated with the 'tag peptide' encoded by the tmRNA and targeted for degradation. The ribosome is freed to recommence translation, which seems to be the essential function of trans-translation. This Hydrogenovibrio crunogenus (strain DSM 25203 / XCL-2) (Thiomicrospira crunogena) protein is SsrA-binding protein.